The primary structure comprises 423 residues: Histidine--tRNA ligase (423 aa).

Belongs to the class-II aminoacyl-tRNA synthetase family.

The protein localises to the cytoplasm. The enzyme catalyses tRNA(His) + L-histidine + ATP = L-histidyl-tRNA(His) + AMP + diphosphate + H(+). The polypeptide is Histidine--tRNA ligase (Picrophilus torridus (strain ATCC 700027 / DSM 9790 / JCM 10055 / NBRC 100828 / KAW 2/3)).